The sequence spans 159 residues: Protein phosphatase 1 regulatory subunit 17 (159 aa).

2 disordered regions span residues 1 to 79 (MSTE…HIPP) and 98 to 127 (RIPK…PALH). 2 stretches are compositionally biased toward basic and acidic residues: residues 62-73 (SDQKKPRRKDTP) and 111-124 (SDME…KDTP). 2 positions are modified to phosphothreonine; by PKG/PRKG1: threonine 72 and threonine 123.

In terms of processing, substrate for cGMP-dependent protein kinase. Phosphorylation of Thr-72 and Thr-123 is required for its phosphatase activity. Phosphorylated by PRKG1 isoform alpha. As to expression, expressed in Purkinje cells of the cerebellum, hippocampus, pons, medulla and eye.

Inhibits phosphatase activities of protein phosphatase 1 (PP1) and protein phosphatase 2A (PP2A) complexes. The sequence is that of Protein phosphatase 1 regulatory subunit 17 (Ppp1r17) from Mus musculus (Mouse).